Here is a 403-residue protein sequence, read N- to C-terminus: MSFRSLIQEMRDEFGSISRHSLRSRSHRGGGGAPRVAAVGPAEAAAMQQSCWAQLPPELLREVLVRIEESEVWWPSRRDVVACAGVCRSWRGITKEIVRVPEASGKLTFPISLKQPGPRDGTLKCFIRRNRTTQTYYLYIGLTEALADDGKFLLAARKCRKPTCTDYLISLDMSDMSKGSNTYIGKLRSNFLGTKFTVYDAHPPYDGAVVSKSRSARVVGLNQVSPRVPAGNYPVSHISYELNVLGARGPRRMNCIMDSIPTSAVQEGGKAPTQTEFPLSGLDSFPSISFFRSKSARIDSATSQLSTQKEEKLVLKNKSPRWHEQLQCWCLNFRGRVTVASVKNFQLVASDENGPTNQEQDKVILQFGKIGKDLFTMDYRYPISAFQSFAICLSSFDTKIACE.

The region spanning 50 to 105 is the F-box domain; it reads SCWAQLPPELLREVLVRIEESEVWWPSRRDVVACAGVCRSWRGITKEIVRVPEASG.

This sequence belongs to the TUB family. In terms of tissue distribution, ubiquitous.

In Oryza sativa subsp. japonica (Rice), this protein is Tubby-like F-box protein 6 (TULP6).